The chain runs to 328 residues: uncharacterized protein (328 aa).

The first 25 residues, 1-25 (MKLFNFKKLSMLIAGFTLVTSPALA), serve as a signal peptide directing secretion.

The protein belongs to the bacterial solute-binding protein 7 family.

The protein resides in the periplasm. This is an uncharacterized protein from Haemophilus influenzae (strain ATCC 51907 / DSM 11121 / KW20 / Rd).